A 257-amino-acid polypeptide reads, in one-letter code: Probable transcriptional regulatory protein SRU_2667 (257 aa).

The span at 1–15 (MAGHTRKWAKVKRKK) shows a compositional bias: basic residues. The tract at residues 1-25 (MAGHTRKWAKVKRKKQKDDRRKSKV) is disordered.

The protein belongs to the TACO1 family.

Its subcellular location is the cytoplasm. This chain is Probable transcriptional regulatory protein SRU_2667, found in Salinibacter ruber (strain DSM 13855 / M31).